A 293-amino-acid chain; its full sequence is MPEGKIIKALSGFYYVQHEEGITQCRGRGVFRKNKITPLVGDQVVFQAENQNEGYVLEVFERKNELVRPPIANVDQAILVFSAVEPDFNPGLLDRFLVLIEYHNIKPIICISKMDLVDEPMRKMVESYANDYREMGYAVLFTSVHAAESIEILKPFLEECVSVVAGQSGVGKSSMLNVLRPDLELKTNDISSHLGRGKHTTRHVELISIGSGLVADTPGFSSLDFIDIEVEDLTFCFPELKEESQYCKFRGCTHLSEPKCAVKAAVEEGRIADYRYEHYKQFVEEIRERKPRY.

One can recognise a CP-type G domain in the interval 63–223 (KNELVRPPIA…VADTPGFSSL (161 aa)). Residues 112-115 (SKMD) and 166-174 (GQSGVGKSS) each bind GTP. The Zn(2+) site is built by Cys-247, Cys-252, His-254, and Cys-260.

Belongs to the TRAFAC class YlqF/YawG GTPase family. RsgA subfamily. In terms of assembly, monomer. Associates with 30S ribosomal subunit, binds 16S rRNA. Zn(2+) is required as a cofactor.

Its subcellular location is the cytoplasm. Functionally, one of several proteins that assist in the late maturation steps of the functional core of the 30S ribosomal subunit. Helps release RbfA from mature subunits. May play a role in the assembly of ribosomal proteins into the subunit. Circularly permuted GTPase that catalyzes slow GTP hydrolysis, GTPase activity is stimulated by the 30S ribosomal subunit. This is Small ribosomal subunit biogenesis GTPase RsgA from Bacillus cytotoxicus (strain DSM 22905 / CIP 110041 / 391-98 / NVH 391-98).